The primary structure comprises 888 residues: Endochitinase A1 (888 aa).

An N-terminal signal peptide occupies residues M1–A22. Residues S29–C338 form the GH18 domain. The active-site Proton donor is the E174. Disordered stretches follow at residues C338–A631, P743–S799, and P813–E855. Low complexity predominate over residues V344–G617. Residue N622 is glycosylated (N-linked (GlcNAc...) asparagine). Positions E764–S775 are enriched in polar residues. An N-linked (GlcNAc...) asparagine glycan is attached at N780. Over residues P835–E855 the composition is skewed to polar residues. Residue G863 is the site of GPI-anchor amidated glycine attachment. Positions A864–L888 are cleaved as a propeptide — removed in mature form.

Belongs to the glycosyl hydrolase 18 family. Chitinase class III subfamily.

The protein localises to the cell membrane. It localises to the secreted. It is found in the cell wall. It catalyses the reaction Random endo-hydrolysis of N-acetyl-beta-D-glucosaminide (1-&gt;4)-beta-linkages in chitin and chitodextrins.. Its activity is regulated as follows. The cyclic peptide natural product argifin acts as a specific inhibitor. Functionally, GPI-anchored chitinase involved in the degradation of chitin, a component of the cell walls of fungi and exoskeletal elements of some animals (including worms and arthropods). Required to reshape the cell wall at the sites where cell wall remodeling and/or cell wall maturation actively take place such as sites of conidia formation. In Aspergillus fumigatus (strain ATCC MYA-4609 / CBS 101355 / FGSC A1100 / Af293) (Neosartorya fumigata), this protein is Endochitinase A1 (chiA1).